A 190-amino-acid chain; its full sequence is UPF0301 protein DP2218 (190 aa).

This sequence belongs to the UPF0301 (AlgH) family.

The protein is UPF0301 protein DP2218 of Desulfotalea psychrophila (strain LSv54 / DSM 12343).